The following is a 303-amino-acid chain: Quinolinate synthase (303 aa).

Residues histidine 23 and serine 40 each coordinate iminosuccinate. Cysteine 85 is a [4Fe-4S] cluster binding site. Iminosuccinate contacts are provided by residues 111 to 113 (YVN) and serine 128. A [4Fe-4S] cluster-binding site is contributed by cysteine 171. Residues 197–199 (HPE) and threonine 214 contribute to the iminosuccinate site. Cysteine 259 is a binding site for [4Fe-4S] cluster.

It belongs to the quinolinate synthase family. Type 2 subfamily. [4Fe-4S] cluster serves as cofactor.

It is found in the cytoplasm. It carries out the reaction iminosuccinate + dihydroxyacetone phosphate = quinolinate + phosphate + 2 H2O + H(+). It functions in the pathway cofactor biosynthesis; NAD(+) biosynthesis; quinolinate from iminoaspartate: step 1/1. In terms of biological role, catalyzes the condensation of iminoaspartate with dihydroxyacetone phosphate to form quinolinate. The sequence is that of Quinolinate synthase from Thermodesulfovibrio yellowstonii (strain ATCC 51303 / DSM 11347 / YP87).